Here is a 308-residue protein sequence, read N- to C-terminus: Ribosomal protein L11 methyltransferase (308 aa).

The S-adenosyl-L-methionine site is built by Thr160, Gly181, Asp203, and Asn245.

It belongs to the methyltransferase superfamily. PrmA family.

It localises to the cytoplasm. The catalysed reaction is L-lysyl-[protein] + 3 S-adenosyl-L-methionine = N(6),N(6),N(6)-trimethyl-L-lysyl-[protein] + 3 S-adenosyl-L-homocysteine + 3 H(+). Its function is as follows. Methylates ribosomal protein L11. In Thermoanaerobacter sp. (strain X514), this protein is Ribosomal protein L11 methyltransferase.